We begin with the raw amino-acid sequence, 523 residues long: GMP synthase [glutamine-hydrolyzing] (523 aa).

Positions 8–205 constitute a Glutamine amidotransferase type-1 domain; it reads KILILDFGSQ…VENICGCARS (198 aa). The active-site Nucleophile is the Cys85. Catalysis depends on residues His179 and Glu181. Residues 206–398 enclose the GMPS ATP-PPase domain; that stretch reads WTPENIIEDA…LGLPAEMLNR (193 aa). 233–239 serves as a coordination point for ATP; the sequence is SGGVDSS.

In terms of assembly, homodimer.

The catalysed reaction is XMP + L-glutamine + ATP + H2O = GMP + L-glutamate + AMP + diphosphate + 2 H(+). Its pathway is purine metabolism; GMP biosynthesis; GMP from XMP (L-Gln route): step 1/1. In terms of biological role, catalyzes the synthesis of GMP from XMP. The polypeptide is GMP synthase [glutamine-hydrolyzing] (Haemophilus ducreyi (strain 35000HP / ATCC 700724)).